Here is a 192-residue protein sequence, read N- to C-terminus: Thymidine kinase (192 aa).

ATP is bound by residues Ser-9–Ser-16 and Asp-87–Gln-90. Catalysis depends on Glu-88, which acts as the Proton acceptor. Zn(2+)-binding residues include Cys-145, Cys-147, Cys-182, and His-185.

Belongs to the thymidine kinase family. As to quaternary structure, homotetramer.

Its subcellular location is the cytoplasm. The catalysed reaction is thymidine + ATP = dTMP + ADP + H(+). The protein is Thymidine kinase of Shewanella oneidensis (strain ATCC 700550 / JCM 31522 / CIP 106686 / LMG 19005 / NCIMB 14063 / MR-1).